Consider the following 132-residue polypeptide: MSLSDPLGDMLTRIRNAQRARHAVCVAPASKLRASVLEALKREGYIRGFAAEELRKGVAQLRIELKYVEGQPVIKEIHRVSKPGRRVYSKIKELPRVYAGLGVSILSTPRGVLSDVEARAANVGGEVLCRVF.

The protein belongs to the universal ribosomal protein uS8 family. As to quaternary structure, part of the 30S ribosomal subunit. Contacts proteins S5 and S12.

One of the primary rRNA binding proteins, it binds directly to 16S rRNA central domain where it helps coordinate assembly of the platform of the 30S subunit. The sequence is that of Small ribosomal subunit protein uS8 from Gluconobacter oxydans (strain 621H) (Gluconobacter suboxydans).